A 167-amino-acid polypeptide reads, in one-letter code: Phosphopantetheine adenylyltransferase (167 aa).

Substrate is bound at residue T10. Residues 10–11 (TF) and H18 each bind ATP. Positions 42, 75, and 89 each coordinate substrate. ATP contacts are provided by residues 90-92 (GVR), E100, and 125-131 (YTYVASS).

It belongs to the bacterial CoaD family. As to quaternary structure, homohexamer. Mg(2+) is required as a cofactor.

It localises to the cytoplasm. The enzyme catalyses (R)-4'-phosphopantetheine + ATP + H(+) = 3'-dephospho-CoA + diphosphate. It participates in cofactor biosynthesis; coenzyme A biosynthesis; CoA from (R)-pantothenate: step 4/5. In terms of biological role, reversibly transfers an adenylyl group from ATP to 4'-phosphopantetheine, yielding dephospho-CoA (dPCoA) and pyrophosphate. The sequence is that of Phosphopantetheine adenylyltransferase from Chlorobium phaeobacteroides (strain DSM 266 / SMG 266 / 2430).